Consider the following 48-residue polypeptide: MVKRKANHVINGMNDAKSQGKGAGYIENDQLVLTEEERQNNKKRKTNQ.

Positions 1–23 (MVKRKANHVINGMNDAKSQGKGA) are disordered.

The protein belongs to the SspO family.

Its subcellular location is the spore core. The sequence is that of Small, acid-soluble spore protein O from Bacillus velezensis (strain DSM 23117 / BGSC 10A6 / LMG 26770 / FZB42) (Bacillus amyloliquefaciens subsp. plantarum).